A 204-amino-acid polypeptide reads, in one-letter code: Putative AgrB-like protein (204 aa).

The next 4 membrane-spanning stretches (helical) occupy residues 52–74, 87–107, 111–131, and 156–176; these read YGIA…YLWL, LNCT…FQNV, NWIV…FAPA, and LILT…LIMI.

The protein belongs to the AgrB family.

It localises to the cell membrane. May be involved in the proteolytic processing of a quorum sensing system signal molecule precursor. The sequence is that of Putative AgrB-like protein from Listeria monocytogenes serotype 4a (strain HCC23).